Here is a 1244-residue protein sequence, read N- to C-terminus: SWI/SNF chromatin remodeling complex subunit swsn-7 (1244 aa).

Residues 24–116 enclose the ARID domain; sequence QRKMAEFYNS…YLSKFEQVET (93 aa). Over residues 486–496 the composition is skewed to polar residues; sequence FTQGSNQQQNP. 3 disordered regions span residues 486–534, 556–583, and 597–619; these read FTQG…GAAP, NREQ…ILAH, and DRRT…ESQL. The span at 497–508 shows a compositional bias: low complexity; sequence HHSQGGHQLGHS. Residues 556–566 show a composition bias toward polar residues; it reads NREQYSTQSSQ. Pro residues predominate over residues 567–578; that stretch reads PHPPHTNVPPSP. Residues 610-619 show a composition bias toward polar residues; it reads PSTNSGESQL. A DNA-binding region (RFX-type winged-helix) is located at residues 623-697; that stretch reads TEKWIRQNCV…IVAQGIRLIR (75 aa). The disordered stretch occupies residues 1134 to 1244; sequence EEEQQKMLSE…TTPVRAGAGI (111 aa). Over residues 1142 to 1158 the composition is skewed to low complexity; that stretch reads SEVPSSASLSSMAGSSS. Composition is skewed to polar residues over residues 1159-1186 and 1194-1212; these read QLPT…SNKP and LNFS…FTAG. Residues 1220 to 1231 are compositionally biased toward low complexity; sequence PIQQHIPSQPSP.

Component of the SWI/SNF-B (PBAF) chromatin remodeling complex.

The protein localises to the nucleus. In terms of biological role, involved in transcriptional activation and repression of select genes by chromatin remodeling (alteration of DNA-nucleosome topology). Required for the stability of the SWI/SNF chromatin remodeling complex SWI/SNF-B (PBAF). Required for regulation of a stress response gene network, probably as part of the PBAF complex and perhaps acting in concert with histone demethylase jmjc-1. Binds to the ethanol and stress response elements (ESRE) in the promoter regions of hsp-16.1 and hsp-16.2, probably as part of the PBAF complex. This chain is SWI/SNF chromatin remodeling complex subunit swsn-7, found in Caenorhabditis elegans.